The primary structure comprises 219 residues: Transmembrane protein 179B (219 aa).

4 consecutive transmembrane segments (helical) span residues 9–29, 65–85, 98–118, and 162–182; these read VELL…ATLT, FVAG…FFWV, IGLR…LVSA, and LHTA…ALLL. Phosphoserine is present on serine 206.

This sequence belongs to the TMEM179 family.

The protein localises to the membrane. The protein is Transmembrane protein 179B (Tmem179b) of Mus musculus (Mouse).